The sequence spans 87 residues: Small ribosomal subunit protein bS20 (87 aa).

Residues Met1–Ser26 form a disordered region.

This sequence belongs to the bacterial ribosomal protein bS20 family.

In terms of biological role, binds directly to 16S ribosomal RNA. The protein is Small ribosomal subunit protein bS20 of Escherichia coli O17:K52:H18 (strain UMN026 / ExPEC).